A 66-amino-acid chain; its full sequence is Neurotoxin Cex11 (66 aa).

Positions 1–64 constitute an LCN-type CS-alpha/beta domain; the sequence is KEGYPVNIYT…SYPYPEKSCG (64 aa). Cystine bridges form between Cys-12/Cys-63, Cys-16/Cys-39, Cys-25/Cys-44, and Cys-29/Cys-46. Cys-63 is subject to Cysteine amide. Positions 64–66 are excised as a propeptide; it reads GRK.

It belongs to the long (4 C-C) scorpion toxin superfamily. Sodium channel inhibitor family. Beta subfamily. In terms of tissue distribution, expressed by the venom gland.

It localises to the secreted. Functionally, beta toxins bind voltage-independently at site-4 of sodium channels (Nav) and shift the voltage of activation toward more negative potentials thereby affecting sodium channel activation and promoting spontaneous and repetitive firing. The protein is Neurotoxin Cex11 of Centruroides exilicauda (Bark scorpion).